Consider the following 107-residue polypeptide: uncharacterized protein (107 aa).

Helical transmembrane passes span 14-34 (YLAEFLLGLTALFGLYLIVAW) and 68-88 (FFVFLGYVAHIIPFTAFLVPI).

It is found in the cell membrane. This is an uncharacterized protein from Haemophilus influenzae (strain ATCC 51907 / DSM 11121 / KW20 / Rd).